The primary structure comprises 203 residues: Small ribosomal subunit protein uS4 (203 aa).

Residues 93–173 (RRFDNVVFRA…IPSWIQVDKA (81 aa)) form the S4 RNA-binding domain.

Belongs to the universal ribosomal protein uS4 family. As to quaternary structure, part of the 30S ribosomal subunit. Contacts protein S5. The interaction surface between S4 and S5 is involved in control of translational fidelity.

Functionally, one of the primary rRNA binding proteins, it binds directly to 16S rRNA where it nucleates assembly of the body of the 30S subunit. In terms of biological role, with S5 and S12 plays an important role in translational accuracy. This chain is Small ribosomal subunit protein uS4, found in Pelodictyon phaeoclathratiforme (strain DSM 5477 / BU-1).